Here is a 38-residue protein sequence, read N- to C-terminus: Beta-defensin 8 (38 aa).

Cystine bridges form between cysteine 7–cysteine 36, cysteine 14–cysteine 29, and cysteine 19–cysteine 37.

Belongs to the beta-defensin family. In terms of tissue distribution, neutrophilic granules.

Its subcellular location is the secreted. Has bactericidal activity. Active against E.coli ML35 and S.aureus 502A. The sequence is that of Beta-defensin 8 (DEFB8) from Bos taurus (Bovine).